A 359-amino-acid polypeptide reads, in one-letter code: Dual-specificity RNA methyltransferase RlmN (359 aa).

The Proton acceptor role is filled by glutamate 102. Residues 108-351 enclose the Radical SAM core domain; it reads EKKRATLCIS…IRKNRGSDIQ (244 aa). A disulfide bridge connects residues cysteine 115 and cysteine 354. Cysteine 122, cysteine 126, and cysteine 129 together coordinate [4Fe-4S] cluster. S-adenosyl-L-methionine-binding positions include 178-179, serine 210, 232-234, and asparagine 311; these read GE and SLH. Residue cysteine 354 is the S-methylcysteine intermediate of the active site.

Belongs to the radical SAM superfamily. RlmN family. It depends on [4Fe-4S] cluster as a cofactor.

It is found in the cytoplasm. The catalysed reaction is adenosine(2503) in 23S rRNA + 2 reduced [2Fe-2S]-[ferredoxin] + 2 S-adenosyl-L-methionine = 2-methyladenosine(2503) in 23S rRNA + 5'-deoxyadenosine + L-methionine + 2 oxidized [2Fe-2S]-[ferredoxin] + S-adenosyl-L-homocysteine. It catalyses the reaction adenosine(37) in tRNA + 2 reduced [2Fe-2S]-[ferredoxin] + 2 S-adenosyl-L-methionine = 2-methyladenosine(37) in tRNA + 5'-deoxyadenosine + L-methionine + 2 oxidized [2Fe-2S]-[ferredoxin] + S-adenosyl-L-homocysteine. Specifically methylates position 2 of adenine 2503 in 23S rRNA and position 2 of adenine 37 in tRNAs. m2A2503 modification seems to play a crucial role in the proofreading step occurring at the peptidyl transferase center and thus would serve to optimize ribosomal fidelity. The chain is Dual-specificity RNA methyltransferase RlmN from Buchnera aphidicola subsp. Cinara cedri (strain Cc).